Reading from the N-terminus, the 231-residue chain is MRENRPVIALDFPTLEDVKAFLAKFPADEKLYVKIGMELYYAAGPEIIRYVKELGHSIFLDLKLHDIPNTVKSAMRVLSNLGVDMTNVHAAGGVEMMKAAREGLGDGPILIAVTQLTSTSEEQMRDFQNIQTTLQESVVHYAQKTAEAGLDGVVCSAHEVPKIKEATNQDFICLTPGIRPAGAAVGDQKRVMTPADAHQIGSDYIVVGRPITQAEDPVAAYHDIKAQWNDQ.

Substrate is bound by residues aspartate 11, lysine 34, 61–70 (DLKLHDIPNT), threonine 117, arginine 179, glutamine 188, glycine 208, and arginine 209. Lysine 63 functions as the Proton donor in the catalytic mechanism.

This sequence belongs to the OMP decarboxylase family. Type 1 subfamily. As to quaternary structure, homodimer.

The catalysed reaction is orotidine 5'-phosphate + H(+) = UMP + CO2. The protein operates within pyrimidine metabolism; UMP biosynthesis via de novo pathway; UMP from orotate: step 2/2. In terms of biological role, catalyzes the decarboxylation of orotidine 5'-monophosphate (OMP) to uridine 5'-monophosphate (UMP). The protein is Orotidine 5'-phosphate decarboxylase of Streptococcus thermophilus (strain ATCC BAA-491 / LMD-9).